The chain runs to 1162 residues: Sialidase (1162 aa).

3 BNR repeats span residues 23–34, 163–174, and 209–220; these read KYSVDDGETWET, FYSEDDGKTWKF, and YESSDMEKPWVE. 2 N-linked (GlcNAc...) asparagine glycosylation sites follow: asparagine 342 and asparagine 394. Residues 587-1123 form a disordered region; it reads HMDSSSDSSA…STPSTPAGSS (537 aa). Over residues 589-615 the composition is skewed to low complexity; the sequence is DSSSDSSAHSTPSTPADSSAHSTPSTP. The segment at 589 to 1120 is 44 X 12 AA tandem repeats, LTR domain; the sequence is DSSSDSSAHS…SAHSTPSTPA (532 aa). 2 stretches are compositionally biased toward polar residues: residues 616–689 and 699–1123; these read VDSS…TPVD and PADS…AGSS. The N-linked (GlcNAc...) asparagine glycan is linked to asparagine 1125.

This sequence belongs to the glycosyl hydrolase 33 family.

It is found in the cell membrane. It carries out the reaction Hydrolysis of alpha-(2-&gt;3)-, alpha-(2-&gt;6)-, alpha-(2-&gt;8)- glycosidic linkages of terminal sialic acid residues in oligosaccharides, glycoproteins, glycolipids, colominic acid and synthetic substrates.. In terms of biological role, developmentally regulated neuraminidase implicated in parasite invasion of cells. The sequence is that of Sialidase (TCNA) from Trypanosoma cruzi.